The chain runs to 185 residues: Large ribosomal subunit protein uL15 (185 aa).

The tract at residues 1 to 51 is disordered; sequence MDLSSLRPAAGAVKNKKRVGRGQGSGNGTTAGKGNKGQQARSGYQKPINEG. Residues 21-35 are compositionally biased toward gly residues; sequence RGQGSGNGTTAGKGN.

The protein belongs to the universal ribosomal protein uL15 family. In terms of assembly, part of the 50S ribosomal subunit.

In terms of biological role, binds to the 23S rRNA. In Chlorobium phaeobacteroides (strain DSM 266 / SMG 266 / 2430), this protein is Large ribosomal subunit protein uL15.